Consider the following 231-residue polypeptide: Dephospho-CoA kinase (231 aa).

The DPCK domain occupies 29 to 231 (RVGLTGGIAS…IAGALRFDRR (203 aa)). ATP is bound at residue 37–42 (ASGKST).

The protein belongs to the CoaE family.

It localises to the cytoplasm. The enzyme catalyses 3'-dephospho-CoA + ATP = ADP + CoA + H(+). Its pathway is cofactor biosynthesis; coenzyme A biosynthesis; CoA from (R)-pantothenate: step 5/5. Functionally, catalyzes the phosphorylation of the 3'-hydroxyl group of dephosphocoenzyme A to form coenzyme A. This chain is Dephospho-CoA kinase, found in Cutibacterium acnes (strain DSM 16379 / KPA171202) (Propionibacterium acnes).